The chain runs to 244 residues: Small ribosomal subunit protein uS3 (244 aa).

The 69-residue stretch at Val-39–Arg-107 folds into the KH type-2 domain. The segment at Val-213–Arg-244 is disordered. Residues Glu-216–Arg-244 are compositionally biased toward basic and acidic residues.

The protein belongs to the universal ribosomal protein uS3 family. Part of the 30S ribosomal subunit. Forms a tight complex with proteins S10 and S14.

Functionally, binds the lower part of the 30S subunit head. Binds mRNA in the 70S ribosome, positioning it for translation. This chain is Small ribosomal subunit protein uS3, found in Xanthomonas campestris pv. campestris (strain 8004).